Reading from the N-terminus, the 1148-residue chain is Phospholipid-transporting ATPase IB (1148 aa).

Residues 1–54 (MSRATSVGDQLDVPARTIYLNQPHLNKFCDNQISTAKYSVVTFLPRFLYEQIRR) are Cytoplasmic-facing. The residue at position 5 (Thr-5) is a Phosphothreonine. A helical membrane pass occupies residues 55-75 (AANAFFLFIALLQQIPDVSPT). Topologically, residues 76–79 (GRYT) are exoplasmic loop. Residues 80–100 (TLVPLIIILTIAGIKEIVEDF) traverse the membrane as a helical segment. At 101–276 (KRHKADNAVN…SNVEKVTNVQ (176 aa)) the chain is on the cytoplasmic side. The chain crosses the membrane as a helical span at residues 277–297 (ILVLFGILLVMALVSSVGALY). Topologically, residues 298–324 (WNGSQGGKNWYIKKMDATSDNFGYNLL) are exoplasmic loop. A helical membrane pass occupies residues 325 to 345 (TFIILYNNLIPISLLVTLEVV). Residues 346 to 847 (KYTQALFINW…CILYCFYKNV (502 aa)) are Cytoplasmic-facing. Residue Asp-388 is the 4-aspartylphosphate intermediate of the active site. Asp-388, Lys-389, Thr-390, Glu-488, Phe-529, Lys-552, Arg-585, Thr-665, Gly-666, Asp-667, Arg-755, and Lys-761 together coordinate ATP. Residue Asp-388 participates in Mg(2+) binding. A Mg(2+)-binding site is contributed by Thr-390. Asp-781 lines the Mg(2+) pocket. ATP-binding residues include Asn-784 and Asp-785. Mg(2+) is bound at residue Asp-785. Residues 848–868 (VLYIIELWFAFVNGFSGQILF) form a helical membrane-spanning segment. Topologically, residues 869–870 (ER) are exoplasmic loop. Residues 871 to 891 (WCIGLYNVIFTALPPFTLGIF) form a helical membrane-spanning segment. At 892-919 (ERSCSQESMLRFPQLYKITQNAEGFNTK) the chain is on the cytoplasmic side. A helical membrane pass occupies residues 920–940 (VFWGHCINALVHSLILFWFPM). Over 941–957 (KALEHDTVLANGHATDY) the chain is Exoplasmic loop. Residues 958 to 978 (LFVGNIVYTYVVVTVCLKAGL) form a helical membrane-spanning segment. Residues 979-988 (ETTAWTKFSH) lie on the Cytoplasmic side of the membrane. Residues 989-1009 (LAVWGSMLIWLVFFGIYSTIW) traverse the membrane as a helical segment. Over 1010–1023 (PTIPIAPDMKGQAT) the chain is Exoplasmic loop. The helical transmembrane segment at 1024–1044 (MVLSSAHFWLGLFLVPTACLI) threads the bilayer. The Cytoplasmic portion of the chain corresponds to 1045-1148 (EDVAWRAAKH…DTTKQKSRKK (104 aa)). Residues 1102–1126 (PPTLFRGSSLQQSMPHGYAFSQEEH) are disordered.

The protein belongs to the cation transport ATPase (P-type) (TC 3.A.3) family. Type IV subfamily. In terms of assembly, component of a P4-ATPase flippase complex which consists of a catalytic alpha subunit and an accessory beta subunit. Interacts with TMEM30A to form a flippase complex. Mg(2+) serves as cofactor. Expressed in retinal photoreceptor cells and testis.

The protein resides in the membrane. Its subcellular location is the golgi apparatus membrane. The protein localises to the endosome membrane. It is found in the cell membrane. It localises to the photoreceptor outer segment membrane. The protein resides in the photoreceptor inner segment membrane. It catalyses the reaction ATP + H2O + phospholipidSide 1 = ADP + phosphate + phospholipidSide 2.. The enzyme catalyses a 1,2-diacyl-sn-glycero-3-phospho-L-serine(out) + ATP + H2O = a 1,2-diacyl-sn-glycero-3-phospho-L-serine(in) + ADP + phosphate + H(+). The catalysed reaction is a 1,2-diacyl-sn-glycero-3-phosphoethanolamine(in) + ATP + H2O = a 1,2-diacyl-sn-glycero-3-phosphoethanolamine(out) + ADP + phosphate + H(+). Its activity is regulated as follows. ATPase activity is stimulated by phosphatidylserine (PS) and minimally by phosphatidylethanolamine (PE). ATPase activity is inhibited by N-ethylmaleimide (NEM) and vanadate. Flippase activity is inhibited by NEM and 1,2-dioleoyl-sn-glycero-3-phospho-L-serine (DOPS). Its function is as follows. Catalytic component of a P4-ATPase flippase complex which catalyzes the hydrolysis of ATP coupled to the transport of aminophospholipids from the outer to the inner leaflet of various membranes and ensures the maintenance of asymmetric distribution of phospholipids. Able to translocate phosphatidylserine, but not phosphatidylcholine. Phospholipid translocation seems also to be implicated in vesicle formation and in uptake of lipid signaling molecules. Reconstituted to liposomes, the ATP8A2:TMEM30A flippase complex predominantly transports phosphatidylserine (PS) and to a lesser extent phosphatidylethanolamine (PE). Phospholipid translocation is not associated with a countertransport of an inorganic ion or other charged substrate from the cytoplasmic side toward the exoplasm in connection with the phosphorylation from ATP. ATP8A2:TMEM30A may be involved in regulation of neurite outgrowth. Proposed to function in the generation and maintenance of phospholipid asymmetry in photoreceptor disk membranes and neuronal axon membranes. May be involved in vesicle trafficking in neuronal cells. Required for normal visual and auditory function; involved in photoreceptor and inner ear spiral ganglion cell survival. The polypeptide is Phospholipid-transporting ATPase IB (Bos taurus (Bovine)).